A 558-amino-acid chain; its full sequence is Poly(A) polymerase PAPalpha (558 aa).

Residues 1–17 (MNTKTYGVTEPISTNGP) show a composition bias toward polar residues. Positions 1–20 (MNTKTYGVTEPISTNGPTPK) are disordered. Residues 86-88 (FGS), 99-101 (DID), D153, K214, Y223, and 232-233 (GV) contribute to the ATP site. Residues D99, D101, and D153 each coordinate Mg(2+). The tract at residues 516-558 (VYEDGEERPKKSGKKRKKVIKEDGQKRVRNESPASSASVNGSS) is disordered. Basic and acidic residues predominate over residues 535–545 (IKEDGQKRVRN). Residues 547–558 (SPASSASVNGSS) show a composition bias toward low complexity.

The protein belongs to the poly(A) polymerase family. Mg(2+) is required as a cofactor. Mn(2+) serves as cofactor.

The protein localises to the nucleus. The enzyme catalyses RNA(n) + ATP = RNA(n)-3'-adenine ribonucleotide + diphosphate. Its function is as follows. Polymerase that creates the 3'-poly(A) tail of mRNA's. May acquire specificity through interaction with a cleavage and polyadenylation factor. This chain is Poly(A) polymerase PAPalpha (PAPALPHA), found in Candida albicans (strain SC5314 / ATCC MYA-2876) (Yeast).